The chain runs to 250 residues: uncharacterized protein (250 aa).

The first 25 residues, 1–25, serve as a signal peptide directing secretion; the sequence is MKTLRTLCVLMILSGVIFFGLKIDA.

This is an uncharacterized protein from Bacillus subtilis (strain 168).